The sequence spans 456 residues: MAHGNAPRDSYHLVGISFFILGLGTLLPWNFFITAIPYFQGRLAGTNSSAETPSTNHTSPTDTFNFNNWVTLLSQLPLLLFTLLNSFLYQCIPESVRILGSLLAILLLFALTAALVKVDLSPGLFFSITMASVWFINSFCAVLQGSLFGQLGTMPSTYSTLFLSGQGLAGIFAALAMLTSLASGVDPQTSALGYFITPCVGILLSIICYLSLPHLKFARYYLTKKPQAPVQELETKAELLGADEKNGIPVSPQQAGPTLDLDPEKELELGLEEPQKPGKPSVFVVFRKIWLTALCLVLVFTVTLSVFPAITAMVTTSSNSPGKWSQFFNPICCFLLFNVMDWLGRSLTSYFLWPDEDSQLLPLLVCLRFLFVPLFMLCHVPQRARLPIIFWQDAYFITFMLLFAISNGYFVSLTMCLAPRQVLPHEREVAGALMTFFLALGLSCGASLSFLFKALL.

Over 1–12 (MAHGNAPRDSYH) the chain is Cytoplasmic. A helical membrane pass occupies residues 13-29 (LVGISFFILGLGTLLPW). Residues 30-68 (NFFITAIPYFQGRLAGTNSSAETPSTNHTSPTDTFNFNN) are Extracellular-facing. N-linked (GlcNAc...) asparagine glycosylation is found at asparagine 47 and asparagine 56. Residues 69–93 (WVTLLSQLPLLLFTLLNSFLYQCIP) form a helical membrane-spanning segment. Residues 94 to 97 (ESVR) are Cytoplasmic-facing. A helical membrane pass occupies residues 98–116 (ILGSLLAILLLFALTAALV). Topologically, residues 117–124 (KVDLSPGL) are extracellular. A helical membrane pass occupies residues 125–143 (FFSITMASVWFINSFCAVL). Residues 144–160 (QGSLFGQLGTMPSTYST) are Cytoplasmic-facing. Residues 161–185 (LFLSGQGLAGIFAALAMLTSLASGV) form a helical membrane-spanning segment. The Extracellular portion of the chain corresponds to 186–192 (DPQTSAL). The helical transmembrane segment at 193–213 (GYFITPCVGILLSIICYLSLP) threads the bilayer. Residues 214–291 (HLKFARYYLT…VFVVFRKIWL (78 aa)) are Cytoplasmic-facing. The residue at position 251 (serine 251) is a Phosphoserine. A helical transmembrane segment spans residues 292-311 (TALCLVLVFTVTLSVFPAIT). Over 312–323 (AMVTTSSNSPGK) the chain is Extracellular. A helical membrane pass occupies residues 324 to 342 (WSQFFNPICCFLLFNVMDW). Residues 343–359 (LGRSLTSYFLWPDEDSQ) lie on the Cytoplasmic side of the membrane. Residues 360–378 (LLPLLVCLRFLFVPLFMLC) form a helical membrane-spanning segment. The Extracellular segment spans residues 379-393 (HVPQRARLPIIFWQD). Residues 394 to 413 (AYFITFMLLFAISNGYFVSL) traverse the membrane as a helical segment. Over 414-431 (TMCLAPRQVLPHEREVAG) the chain is Cytoplasmic. The helical transmembrane segment at 432–452 (ALMTFFLALGLSCGASLSFLF) threads the bilayer. At 453–456 (KALL) the chain is on the extracellular side.

Belongs to the SLC29A/ENT transporter (TC 2.A.57) family. As to expression, expressed in squeletal muscles. Expressed in testis at the blood-brain-barrier.

The protein resides in the apical cell membrane. It localises to the basolateral cell membrane. The enzyme catalyses uridine(out) = uridine(in). It catalyses the reaction inosine(in) = inosine(out). The catalysed reaction is adenosine(in) = adenosine(out). It carries out the reaction thymidine(in) = thymidine(out). The enzyme catalyses hypoxanthine(out) = hypoxanthine(in). It catalyses the reaction adenine(out) = adenine(in). The catalysed reaction is cytidine(in) = cytidine(out). It carries out the reaction thymine(out) = thymine(in). The enzyme catalyses uracil(in) = uracil(out). It catalyses the reaction guanine(out) = guanine(in). The catalysed reaction is guanosine(in) = guanosine(out). Its function is as follows. Bidirectional uniporter involved in the facilitative transport of nucleosides and nucleobases, and contributes to maintaining their cellular homeostasis. Functions as a Na(+)-independent, passive transporter. Involved in the transport of nucleosides such as inosine, adenosine, uridine, thymidine, cytidine and guanosine. Also able to transport purine nucleobases (hypoxanthine, adenine, guanine) and pyrimidine nucleobases (thymine, uracil). Involved in nucleoside transport at basolateral membrane of kidney cells, allowing liver absorption of nucleoside metabolites. Mediates apical nucleoside uptake into Sertoli cells, thereby regulating the transport of nucleosides in testis across the blood-testis-barrier. Mediates both the influx and efflux of hypoxanthine in skeletal muscle microvascular endothelial cells to control the amount of intracellular hypoxanthine available for xanthine oxidase-mediated ROS production. This Rattus norvegicus (Rat) protein is Equilibrative nucleoside transporter 2.